A 376-amino-acid chain; its full sequence is Chaperone protein DnaJ (376 aa).

The region spanning 5 to 70 (DYYEVLGVGR…DKKAAYDQFG (66 aa)) is the J domain. Residues 132–210 (GLTKELRIPT…CHGEGRVEKS (79 aa)) form a CR-type zinc finger. Zn(2+)-binding residues include Cys-145, Cys-148, Cys-162, Cys-165, Cys-184, Cys-187, Cys-198, and Cys-201. CXXCXGXG motif repeat units follow at residues 145–152 (CDSCDGSG), 162–169 (CGTCHGQG), 184–191 (CPTCHGRG), and 198–205 (CNKCHGEG).

The protein belongs to the DnaJ family. Homodimer. The cofactor is Zn(2+).

The protein resides in the cytoplasm. Functionally, participates actively in the response to hyperosmotic and heat shock by preventing the aggregation of stress-denatured proteins and by disaggregating proteins, also in an autonomous, DnaK-independent fashion. Unfolded proteins bind initially to DnaJ; upon interaction with the DnaJ-bound protein, DnaK hydrolyzes its bound ATP, resulting in the formation of a stable complex. GrpE releases ADP from DnaK; ATP binding to DnaK triggers the release of the substrate protein, thus completing the reaction cycle. Several rounds of ATP-dependent interactions between DnaJ, DnaK and GrpE are required for fully efficient folding. Also involved, together with DnaK and GrpE, in the DNA replication of plasmids through activation of initiation proteins. The chain is Chaperone protein DnaJ from Shewanella pealeana (strain ATCC 700345 / ANG-SQ1).